The primary structure comprises 463 residues: Fumarate hydratase class II (463 aa).

Substrate is bound by residues 98–100 (SGT), 129–132 (HPND), 139–141 (SSN), and Thr-187. His-188 serves as the catalytic Proton donor/acceptor. Ser-318 is a catalytic residue. Substrate contacts are provided by residues Ser-319 and 324–326 (KVN).

The protein belongs to the class-II fumarase/aspartase family. Fumarase subfamily. In terms of assembly, homotetramer.

It is found in the cytoplasm. It carries out the reaction (S)-malate = fumarate + H2O. The protein operates within carbohydrate metabolism; tricarboxylic acid cycle; (S)-malate from fumarate: step 1/1. Involved in the TCA cycle. Catalyzes the stereospecific interconversion of fumarate to L-malate. This is Fumarate hydratase class II from Rickettsia bellii (strain RML369-C).